A 131-amino-acid polypeptide reads, in one-letter code: MYMARMLSEMSTVKRPDGCYIVDQEHYQIVSGYAGELLPSNSNVCNCGISVALQKLENKSHNGMDCIIYTSSFPDCSHCLEKILNLKISKIWHWNSPTTTKELKILEMLEASSIQCEKYTPTRTISINFNN.

A CMP/dCMP-type deaminase domain is found at 1 to 116 (MYMARMLSEM…EMLEASSIQC (116 aa)).

This is an uncharacterized protein from Caenorhabditis elegans.